The primary structure comprises 452 residues: Netrin-5 (452 aa).

The first 34 residues, 1–34 (MTDYRTLFSSPGAGSTVTTPITLSLLLLLSQATS), serve as a signal peptide directing secretion. 11 disulfides stabilise this stretch: C173–C182, C175–C191, C193–C202, C205–C225, C228–C240, C230–C247, C249–C258, C261–C275, C298–C376, C302–C378, and C317–C438. Laminin EGF-like domains follow at residues 173 to 227 (CQCH…PCLP) and 228 to 277 (CQCH…PCQR). An NTR domain is found at 298 to 438 (CQGYCNVSVS…LQQKERGGAC (141 aa)). N-linked (GlcNAc...) asparagine glycosylation is present at N303.

The protein localises to the secreted. In terms of biological role, plays a role in neurogenesis. Prevents motor neuron cell body migration out of the neural tube. The chain is Netrin-5 (Ntn5) from Mus musculus (Mouse).